The chain runs to 129 residues: Transcriptional activator protein (129 aa).

Over residues 1–12 (MRSSSPSQPPSI) the composition is skewed to low complexity. Positions 1-23 (MRSSSPSQPPSIKKAHRQAKKRA) are disordered. Over residues 13-23 (KKAHRQAKKRA) the composition is skewed to basic residues. A Nuclear localization signal motif is present at residues 13–28 (KKAHRQAKKRAIRRRR). The segment at 33–50 (CGCSIYFHIDCAGHGFTH) is a zinc-finger region. Residues 73 to 117 (LFQDKPSRGHAIHQDQDIQRPNPVQPQPQESIGSPQSIPELPSLD) form a disordered region. A compositionally biased stretch (polar residues) spans 99–109 (QPQESIGSPQS). The interval 115–129 (SLDDIDDSFWVELFS) is transactivation.

It belongs to the geminiviridae transcriptional activator protein family. Monomer. Homodimer. Homooligomer. Self-interaction correlates with nuclear localization and efficient activation of transcription. Monomers suppress local silencing by interacting with and inactivating host adenosine kinase 2 (ADK2) in the cytoplasm. Interacts with and inhibits host SNF1 kinase. Binds to ssDNA. In terms of processing, phosphorylated.

It is found in the host nucleus. It localises to the host cytoplasm. Strong activator of the late viral genes promoters. Enhances the expression of the capsid protein and nuclear shuttle protein. Acts as a suppressor of RNA-mediated gene silencing, also known as post-transcriptional gene silencing (PTGS), a mechanism of plant viral defense that limits the accumulation of viral RNAs. Suppresses the host RNA silencing by inhibiting adenosine kinase 2 (ADK2), a kinase involved in a general methylation pathway. Also suppresses the host basal defense by interacting with and inhibiting SNF1 kinase, a key regulator of cell metabolism implicated in innate antiviral defense. Determines pathogenicity. This Solanum tuberosum (Potato) protein is Transcriptional activator protein.